The following is a 184-amino-acid chain: MSAERLVYVMGPSGAGKDSLLAYARKHVREPRIAFAHRYITRKSDGHENHVELTRDEFAARAQLGFFALEWSSHGFRYGVGVEIDAWLAAGSVVVVSGSRAHLPAALERYPQMCVVHIDAAPHVLAERLATRGRETADEIRARLARSVRWAVPDGIALTAIDNSGTLDDAGRVLVALLEGLARS.

11–18 (GPSGAGKD) contributes to the ATP binding site.

It belongs to the ribose 1,5-bisphosphokinase family.

The enzyme catalyses alpha-D-ribose 1,5-bisphosphate + ATP = 5-phospho-alpha-D-ribose 1-diphosphate + ADP. The protein operates within metabolic intermediate biosynthesis; 5-phospho-alpha-D-ribose 1-diphosphate biosynthesis; 5-phospho-alpha-D-ribose 1-diphosphate from D-ribose 5-phosphate (route II): step 3/3. Functionally, catalyzes the phosphorylation of ribose 1,5-bisphosphate to 5-phospho-D-ribosyl alpha-1-diphosphate (PRPP). The chain is Ribose 1,5-bisphosphate phosphokinase PhnN from Burkholderia mallei (strain SAVP1).